Here is a 1081-residue protein sequence, read N- to C-terminus: WD repeat-containing protein 64 (1081 aa).

WD repeat units lie at residues 102–152 (DPIA…ATQK), 153–198 (GLIT…GSSQ), 199–265 (ENYF…VLDS), 266–314 (KNFK…LEDN), 315–356 (LPVR…NIST), 357–400 (KPVG…TLSL), 401–444 (LQVF…TRMI), 445–488 (QDTK…ETGL), 489–532 (QVYQ…FGSG), 533–631 (QEMK…LIVE), 632–740 (RNFS…PQSS), 741–803 (KGSK…EGRL), 804–857 (LKDM…EKKF), and 858–895 (KQLL…RLWH). Residues 726-745 (CSSSQCESSKGPQSSKGSKQ) are compositionally biased toward low complexity. The segment at 726-757 (CSSSQCESSKGPQSSKGSKQSIHDSEVKGEQT) is disordered. A compositionally biased stretch (basic and acidic residues) spans 746 to 756 (SIHDSEVKGEQ). The tract at residues 1036–1060 (DSSDGITGKKKGGHVQREKAPRRRS) is disordered. Over residues 1043 to 1060 (GKKKGGHVQREKAPRRRS) the composition is skewed to basic residues.

In Homo sapiens (Human), this protein is WD repeat-containing protein 64 (WDR64).